A 216-amino-acid chain; its full sequence is MDAKQRIARRVAQELRDGDIVNLGIGLPTMVANYLPEGIHITLQSENGFLGLGPVTTAHPDLVNAGGQPCGVLPGAAMFDSAMSFALIRGGHIDACVLGGLQVDEEANLANWVVPGKMVPGMGGAMDLVTGSRKVIIAMEHCAKDGSAKILRRCTMPLTAQHAVHMLVTELAVFRFIDGKMWLTEIADGCDLATVRAKTEARFEVAADLNTQRGDL.

Residue glutamate 46 is part of the active site.

This sequence belongs to the 3-oxoacid CoA-transferase subunit B family. In terms of assembly, heterotetramer composed of two alpha subunits (AtoD) and two beta subunits (AtoA).

It localises to the cytoplasm. The catalysed reaction is an acyl-CoA + acetate = a carboxylate + acetyl-CoA. It carries out the reaction acetoacetate + acetyl-CoA = acetoacetyl-CoA + acetate. The enzyme catalyses butanoate + acetyl-CoA = butanoyl-CoA + acetate. It catalyses the reaction acetoacetate + butanoyl-CoA = acetoacetyl-CoA + butanoate. It functions in the pathway lipid metabolism; short-chain fatty acid metabolism. Its activity is regulated as follows. Inhibited by p-chloromercuribenzoate. Its function is as follows. Coenzyme A transferase which is involved in short-chain fatty acid degradation and catalyzes the activation of short-chain fatty acids to their respective CoA thiolesters. During acetoacetate degradation, catalyzes the transfer of CoA from acetyl-CoA to acetoacetate by a mechanism involving a covalent enzyme-CoA compound as a reaction intermediate. Utilizes a variety of short chain acyl-CoA and carboxylic acid substrates but exhibits maximal activity with normal and 3-keto substrates. The chain is Acetate CoA-transferase subunit beta from Escherichia coli (strain K12).